The primary structure comprises 97 residues: uncharacterized protein (97 aa).

Positions 38–97 (TSPPDWNKFSGKVSINEPTTSKSKSKSTSTSTSTSTSTSTSTSTSSSTSSTSSTTSSINK) are disordered. The span at 56–97 (TTSKSKSKSTSTSTSTSTSTSTSTSTSSSTSSTSSTTSSINK) shows a compositional bias: low complexity.

This is an uncharacterized protein from Dictyostelium discoideum (Social amoeba).